The primary structure comprises 449 residues: UDP-N-acetylmuramoylalanine--D-glutamate ligase (449 aa).

118-124 serves as a coordination point for ATP; the sequence is GTNGKTT.

Belongs to the MurCDEF family.

The protein localises to the cytoplasm. The catalysed reaction is UDP-N-acetyl-alpha-D-muramoyl-L-alanine + D-glutamate + ATP = UDP-N-acetyl-alpha-D-muramoyl-L-alanyl-D-glutamate + ADP + phosphate + H(+). It functions in the pathway cell wall biogenesis; peptidoglycan biosynthesis. Functionally, cell wall formation. Catalyzes the addition of glutamate to the nucleotide precursor UDP-N-acetylmuramoyl-L-alanine (UMA). This Staphylococcus carnosus (strain TM300) protein is UDP-N-acetylmuramoylalanine--D-glutamate ligase.